Here is a 314-residue protein sequence, read N- to C-terminus: Putative S-adenosyl-L-methionine-dependent methyltransferase MRA_3805 (314 aa).

S-adenosyl-L-methionine contacts are provided by residues aspartate 132 and 161–162 (DL).

The protein belongs to the UPF0677 family.

Functionally, exhibits S-adenosyl-L-methionine-dependent methyltransferase activity. In Mycobacterium tuberculosis (strain ATCC 25177 / H37Ra), this protein is Putative S-adenosyl-L-methionine-dependent methyltransferase MRA_3805.